Here is a 376-residue protein sequence, read N- to C-terminus: Copper-containing nitrite reductase (376 aa).

Positions 1 to 33 (MSEQFQMTRRSMLAGAAIAGAVTPLIGAVSAHA) form a signal peptide, tat-type signal. 2 consecutive Plastocyanin-like domains span residues 98-193 (MTFN…IMVL) and 258-359 (GAVG…FAVT). Residues histidine 131, histidine 136, histidine 171, cysteine 172, histidine 181, methionine 186, and histidine 342 each contribute to the Cu cation site.

Belongs to the multicopper oxidase family. Homotrimer. The cofactor is Cu(2+). Requires Cu(+) as cofactor. FAD serves as cofactor. In terms of processing, predicted to be exported by the Tat system. The position of the signal peptide cleavage has not been experimentally proven.

Its subcellular location is the periplasm. It catalyses the reaction nitric oxide + Fe(III)-[cytochrome c] + H2O = Fe(II)-[cytochrome c] + nitrite + 2 H(+). It functions in the pathway nitrogen metabolism; nitrate reduction (denitrification); dinitrogen from nitrate: step 2/4. This is Copper-containing nitrite reductase (nirK) from Rhizobium meliloti (strain 1021) (Ensifer meliloti).